The following is a 366-amino-acid chain: Glucan organizing enzyme 1 (366 aa).

Residues 1 to 24 lie on the Extracellular side of the membrane; that stretch reads MLPLWARGGKPIVIPLPQKRHITL. Residues 25 to 45 traverse the membrane as a helical segment; that stretch reads PALPILLLLLGTGFLLHSLFF. Residues 46 to 366 lie on the Cytoplasmic side of the membrane; that stretch reads PPPPPHPPGK…ETYKKWKRGH (321 aa).

The protein belongs to the glycosyltransferase 32 family.

The protein localises to the cell membrane. Functionally, plays a role in the localization of glycogen rosettes to the plasma membrane. Required for correct cell wall organization and may facilitate the connection between beta-1,3-glucan and beta-1,6-glucan in the cell wall. The protein is Glucan organizing enzyme 1 of Cryptococcus neoformans var. grubii serotype A (strain H99 / ATCC 208821 / CBS 10515 / FGSC 9487) (Filobasidiella neoformans var. grubii).